The chain runs to 269 residues: MVQPSPAPVVTITPAPAPAAPSHPHGWKRKQEFKALHLALAFLTTLPLPHVRDVQPGDFARASAYYPLAGYAVGGLVAGLLYLNVPLPPGVVAALGVGLWLGLTGMLHFDGLVDSADALFAMKSPEQRLDILKDVHVGAFGLATGVLALLLLWSLLGAGLPWYAPLVAAVVARMVVLMPMNAYPAARQESLGAQSRQGRWGLAFLFALPALLLPHAWLAALVALLGVTLVAAWAARRLGGGLSGDVYGLLIVVAELLVLGFYGWGFTPL.

Transmembrane regions (helical) follow at residues 63–83 (SAYY…LLYL), 87–107 (LPPG…TGML), 137–157 (VGAF…SLLG), 158–178 (AGLP…VVLM), 202–222 (LAFL…AALV), and 246–266 (VYGL…GWGF).

The protein belongs to the CobS family. Mg(2+) serves as cofactor.

The protein resides in the cell membrane. The catalysed reaction is alpha-ribazole + adenosylcob(III)inamide-GDP = adenosylcob(III)alamin + GMP + H(+). It carries out the reaction alpha-ribazole 5'-phosphate + adenosylcob(III)inamide-GDP = adenosylcob(III)alamin 5'-phosphate + GMP + H(+). It functions in the pathway cofactor biosynthesis; adenosylcobalamin biosynthesis; adenosylcobalamin from cob(II)yrinate a,c-diamide: step 7/7. Its function is as follows. Joins adenosylcobinamide-GDP and alpha-ribazole to generate adenosylcobalamin (Ado-cobalamin). Also synthesizes adenosylcobalamin 5'-phosphate from adenosylcobinamide-GDP and alpha-ribazole 5'-phosphate. This is Adenosylcobinamide-GDP ribazoletransferase from Deinococcus radiodurans (strain ATCC 13939 / DSM 20539 / JCM 16871 / CCUG 27074 / LMG 4051 / NBRC 15346 / NCIMB 9279 / VKM B-1422 / R1).